A 186-amino-acid polypeptide reads, in one-letter code: Transposon Tn21 resolvase (186 aa).

Residues 4–137 enclose the Resolvase/invertase-type recombinase catalytic domain; the sequence is QRIGYIRVST…EGIALAKQRG (134 aa). S12 acts as the O-(5'-phospho-DNA)-serine intermediate in catalysis. Positions 164-183 form a DNA-binding region, H-T-H motif; sequence KTKLAREFGISRETLYQYLR.

The protein belongs to the site-specific recombinase resolvase family.

In terms of biological role, resolvase catalyzes the resolution (a site-specific recombination) of the cointegrated replicon to yield the final transposition products. The polypeptide is Transposon Tn21 resolvase (tnpR) (Escherichia coli).